The following is a 178-amino-acid chain: Inorganic pyrophosphatase (178 aa).

Residues K30, R44, and Y56 each contribute to the substrate site. Residues D66, D71, and D103 each contribute to the Mg(2+) site. Y142 serves as a coordination point for substrate.

This sequence belongs to the PPase family. Homohexamer. Mg(2+) is required as a cofactor.

Its subcellular location is the cytoplasm. The enzyme catalyses diphosphate + H2O = 2 phosphate + H(+). Catalyzes the hydrolysis of inorganic pyrophosphate (PPi) forming two phosphate ions. In Xanthomonas axonopodis pv. citri (strain 306), this protein is Inorganic pyrophosphatase.